Reading from the N-terminus, the 610-residue chain is MNIAPQFPTPEVTTGTLPASAKVHIAGEIHPQIRVPMRQITLHPTSGEPPVNVYDSSGPYTDPNATIAIDAGLPRIRAEWVVARGDVEPYAGRHVKPEDNGFASGEKLTPEFPVRNAPLRAKPGQAVTQLAYARAGIVTPEMEFIAIRENIGRKAAKDALIRDGESFGASIPDYVTPEFVRQEVAMGRAIIPANINHPEAEPMIIGRNFLVKINANIGNSAVTSSMAEEVEKMVWAIRWGADTVMDLSTGRNIHNIRDWIIRNSPVPIGTVPLYQALEKVHGIAENLTWDVFRDTLIEQAEQGVDYFTIHAGVRLSYIHLTVNRVTGIVSRGGSIMAKWCLHHHKESFLYEHFDEICDICRAYDVSFSLGDGLRPGSIADANDAAQFAELETLGELTKIAWAKDCQVMIEGPGHVPMHKIKENMDKQLKTCGEAPFYTLGPLTTDIAPGYDHITSGIGAAMIGWYGTAMLCYVTPKEHLGLPDRNDVKTGVITYKIAAHAADLAKGHPAAQVRDDALSRARFEFRWEDQFNLSLDPDTARSFHDETLPKEAHKVAHFCSMCGPKFCSMRISHDIRAEAQKEGLEAMAAKYRDGGDLYMPVSDEEKPSVGE.

Substrate is bound by residues Asn-216, Met-245, Tyr-274, His-310, 330-332, 371-374, and Glu-410; these read SRG and DGLR. His-414 contacts Zn(2+). Tyr-437 is a binding site for substrate. Zn(2+) is bound at residue His-478. 3 residues coordinate [4Fe-4S] cluster: Cys-558, Cys-561, and Cys-566.

The protein belongs to the ThiC family. In terms of assembly, homodimer. It depends on [4Fe-4S] cluster as a cofactor.

It carries out the reaction 5-amino-1-(5-phospho-beta-D-ribosyl)imidazole + S-adenosyl-L-methionine = 4-amino-2-methyl-5-(phosphooxymethyl)pyrimidine + CO + 5'-deoxyadenosine + formate + L-methionine + 3 H(+). It participates in cofactor biosynthesis; thiamine diphosphate biosynthesis. Its function is as follows. Catalyzes the synthesis of the hydroxymethylpyrimidine phosphate (HMP-P) moiety of thiamine from aminoimidazole ribotide (AIR) in a radical S-adenosyl-L-methionine (SAM)-dependent reaction. The polypeptide is Phosphomethylpyrimidine synthase (Allorhizobium ampelinum (strain ATCC BAA-846 / DSM 112012 / S4) (Agrobacterium vitis (strain S4))).